We begin with the raw amino-acid sequence, 1466 residues long: ABC transporter G family member 40 (1466 aa).

The tract at residues 1 to 21 (MSHRHHAALVASASGRSPSWG) is disordered. The ABC transporter 1 domain occupies 176–449 (GLIGQFGSSN…FEASGFRCPQ (274 aa)). 209–216 (GPPSSGKS) contacts ATP. An ABC transmembrane type-2 1 domain is found at 527-740 (ESLKAVLCRE…SQNAISINEF (214 aa)). 6 helical membrane-spanning segments follow: residues 545-565 (FLYIFKVTQLIILAFLSMTVF), 581-601 (FLGALTFNLITVMFNGLSELN), 633-653 (VPVSLVEATVWVVITYYVMGF), 664-684 (FLAFFVTHLMAMALFRFLGAI), 690-710 (IAISFGMLVLLIVFVFGGFVI), and 776-796 (FWLSIGALVGFIILFNTLYIL). Over residues 821-831 (YTETRNEEHRS) the composition is skewed to basic and acidic residues. Residues 821-851 (YTETRNEEHRSRTSTTTSSIPTSANGEGNRP) form a disordered region. Residues 833-843 (TSTTTSSIPTS) are compositionally biased toward low complexity. In terms of domain architecture, ABC transporter 2 spans 865–1117 (LCFNHLNYYV…KLVEYFETIL (253 aa)). 910-917 (GVSGAGKT) contacts ATP. Positions 1190-1404 (IQCVANLWKQ…TIYGVIASQF (215 aa)) constitute an ABC transmembrane type-2 2 domain. 7 consecutive transmembrane segments (helical) span residues 1209-1229 (YNSLRYLTTFLYGLFFGTVFW), 1241-1261 (LYNLLGATYAAIFFIGATNCM), 1297-1317 (FIYNIIQGILYTVIIYAMIGY), 1327-1347 (FLFFIVSSFNYFTFFGMMLVA), 1355-1375 (ANILITFALPLWNLFAGFLIF), 1396-1416 (IYGVIASQFGGNGGSISVPGG), and 1435-1455 (FLGYVILAHFGFMAAFVLIFG).

This sequence belongs to the ABC transporter superfamily. ABCG family. PDR (TC 3.A.1.205) subfamily.

It is found in the membrane. This is ABC transporter G family member 40 from Oryza sativa subsp. japonica (Rice).